A 381-amino-acid chain; its full sequence is Queuine tRNA-ribosyltransferase (381 aa).

The active-site Proton acceptor is Asp-92. Substrate is bound by residues Asp-92–Phe-96, Asp-146, Gln-190, and Gly-217. Residues Gly-248–Asp-254 form an RNA binding region. Asp-267 functions as the Nucleophile in the catalytic mechanism. The RNA binding; important for wobble base 34 recognition stretch occupies residues Thr-272–Arg-276. Zn(2+)-binding residues include Cys-305, Cys-307, Cys-310, and His-337.

The protein belongs to the queuine tRNA-ribosyltransferase family. In terms of assembly, homodimer. Within each dimer, one monomer is responsible for RNA recognition and catalysis, while the other monomer binds to the replacement base PreQ1. It depends on Zn(2+) as a cofactor.

The enzyme catalyses 7-aminomethyl-7-carbaguanine + guanosine(34) in tRNA = 7-aminomethyl-7-carbaguanosine(34) in tRNA + guanine. Its pathway is tRNA modification; tRNA-queuosine biosynthesis. Functionally, catalyzes the base-exchange of a guanine (G) residue with the queuine precursor 7-aminomethyl-7-deazaguanine (PreQ1) at position 34 (anticodon wobble position) in tRNAs with GU(N) anticodons (tRNA-Asp, -Asn, -His and -Tyr). Catalysis occurs through a double-displacement mechanism. The nucleophile active site attacks the C1' of nucleotide 34 to detach the guanine base from the RNA, forming a covalent enzyme-RNA intermediate. The proton acceptor active site deprotonates the incoming PreQ1, allowing a nucleophilic attack on the C1' of the ribose to form the product. After dissociation, two additional enzymatic reactions on the tRNA convert PreQ1 to queuine (Q), resulting in the hypermodified nucleoside queuosine (7-(((4,5-cis-dihydroxy-2-cyclopenten-1-yl)amino)methyl)-7-deazaguanosine). The polypeptide is Queuine tRNA-ribosyltransferase (Xanthomonas campestris pv. campestris (strain B100)).